We begin with the raw amino-acid sequence, 2053 residues long: Nonribosomal peptide synthetase pboA (2053 aa).

The segment at 16-402 (ACRDNADRPA…GRRDRVAKVR (387 aa)) is adenylation 1. The 77-residue stretch at 503–579 (RSYASVDEVI…HLITVCRERR (77 aa)) folds into the Carrier 1 domain. Ser540 carries the post-translational modification O-(pantetheine 4'-phosphoryl)serine. Residues 611–896 (NDPSLYCVKH…LLQSVHRTVQ (286 aa)) form a condensation 1 region. Residues 1034 to 1418 (SAAARNPTNI…GRRDRQVKLR (385 aa)) are adenylation 2. Residues 1515 to 1593 (VPDTSVKKII…DIVALVEGKI (79 aa)) enclose the Carrier 2 domain. Residue Ser1553 is modified to O-(pantetheine 4'-phosphoryl)serine. The interval 1630–1981 (NSQCQSGFNV…LQLRLEYDSD (352 aa)) is condensation 2.

This sequence belongs to the NRP synthetase family. Requires pantetheine 4'-phosphate as cofactor.

It participates in secondary metabolite biosynthesis. In terms of biological role, nonribosomal peptide synthetase; part of the gene cluster that mediates the biosynthesis of protubonine B, a hydroxylated and diacetylated cyclo-L-Trp-L-Leu derivative. The first step of the protubonine B synthesis is performed by the nonribosomal peptide synthetase pboA that catalyzes the formation of cyclo-L-Trp-L-Leu by condensing L-Leu with L-Trp. The flavin-dependent monooxygenase pboD is responsible for hydroxylation at C-3 of the indole ring and subsequent formation of the pyrrolidine ring, leadind to protubonine D. Protubonine D is further diacetylated by two acetyltransferases, pboB and pboC, to form the final product protubonine B via protubonine C. The sequence is that of Nonribosomal peptide synthetase pboA from Aspergillus ustus.